Reading from the N-terminus, the 236-residue chain is Large ribosomal subunit protein uL3 (236 aa).

Disordered regions lie at residues 132 to 153 (SNRASHGNSRSHNVPGSIGMAQ) and 200 to 236 (KGGDVTVSPSIRSARPTNNGNVNAAAKGGAKSGKKGG). Over residues 133 to 145 (NRASHGNSRSHNV) the composition is skewed to polar residues. Residue Q153 is modified to N5-methylglutamine. Residues 206-216 (VSPSIRSARPT) are compositionally biased toward polar residues. Positions 217-228 (NNGNVNAAAKGG) are enriched in low complexity.

The protein belongs to the universal ribosomal protein uL3 family. Part of the 50S ribosomal subunit. Forms a cluster with proteins L14 and L19. Post-translationally, methylated by PrmB.

Its function is as follows. One of the primary rRNA binding proteins, it binds directly near the 3'-end of the 23S rRNA, where it nucleates assembly of the 50S subunit. This chain is Large ribosomal subunit protein uL3, found in Nitrosospira multiformis (strain ATCC 25196 / NCIMB 11849 / C 71).